An 84-amino-acid polypeptide reads, in one-letter code: MFTLKKPLLLIVLLGIISLSLCEQERAADEDEGSEIKRGIFSKFAGKGIKNLLVKGVKNIGKEVGMDVIRTGIDIAGCKIKGEC.

Positions 1-22 (MFTLKKPLLLIVLLGIISLSLC) are cleaved as a signal peptide. The propeptide at 23-36 (EQERAADEDEGSEI) is removed in mature form. Cys78 and Cys84 are disulfide-bonded.

In terms of tissue distribution, expressed by the skin glands.

Its subcellular location is the secreted. In terms of biological role, has antimicrobial activity against Gram-negative bacterium E.coli ATCC 8739 (MIC=6.3 ug), against Gram positive bacteria S.aureus ATCC 6538 (MIC=3.1 ug), methicillin-resistant S.aureus ATCC 43300 (MIC=25 ug) and B.subtilis ATCC 6633 (MIC=25 ug). Has no activity against fungus C.albicans ATCC 90028. The chain is Esculentin-1SIa from Odorrana ishikawae (Ishikawa's frog).